The chain runs to 1071 residues: Carbamoyl phosphate synthase large chain (1071 aa).

Positions 1-399 (MPKREDIKKV…SLLKAFKSLD (399 aa)) are carboxyphosphate synthetic domain. Arg129, Arg169, Gly175, Gly176, Glu208, Val210, Glu215, Gly241, Val242, His243, Gln284, and Glu296 together coordinate ATP. The ATP-grasp 1 domain maps to 133 to 325 (KETMLRIGEK…IARVTAKIAI (193 aa)). Gln284, Glu296, and Asn298 together coordinate Mg(2+). The Mn(2+) site is built by Gln284, Glu296, and Asn298. Positions 400-540 (IDNQLGNKHW…YSTYEDSCET (141 aa)) are oligomerization domain. The interval 541–932 (NATTDKKKIL…YKAELAADNV (392 aa)) is carbamoyl phosphate synthetic domain. The 192-residue stretch at 673–864 (YILMKELGVP…LAKIAAKVIA (192 aa)) folds into the ATP-grasp 2 domain. 10 residues coordinate ATP: Arg709, Asp748, Leu750, Glu755, Gly780, Val781, His782, Ser783, Gln823, and Glu835. Residues Gln823, Glu835, and Asn837 each contribute to the Mg(2+) site. The Mn(2+) site is built by Gln823, Glu835, and Asn837. The region spanning 931–1071 (NVLPLTGKVF…INEYHKEMEN (141 aa)) is the MGS-like domain. Residues 933–1071 (LPLTGKVFLS…INEYHKEMEN (139 aa)) form an allosteric domain region.

The protein belongs to the CarB family. As to quaternary structure, composed of two chains; the small (or glutamine) chain promotes the hydrolysis of glutamine to ammonia, which is used by the large (or ammonia) chain to synthesize carbamoyl phosphate. Tetramer of heterodimers (alpha,beta)4. Requires Mg(2+) as cofactor. Mn(2+) is required as a cofactor.

It catalyses the reaction hydrogencarbonate + L-glutamine + 2 ATP + H2O = carbamoyl phosphate + L-glutamate + 2 ADP + phosphate + 2 H(+). It carries out the reaction hydrogencarbonate + NH4(+) + 2 ATP = carbamoyl phosphate + 2 ADP + phosphate + 2 H(+). The protein operates within amino-acid biosynthesis; L-arginine biosynthesis; carbamoyl phosphate from bicarbonate: step 1/1. Its pathway is pyrimidine metabolism; UMP biosynthesis via de novo pathway; (S)-dihydroorotate from bicarbonate: step 1/3. In terms of biological role, large subunit of the glutamine-dependent carbamoyl phosphate synthetase (CPSase). CPSase catalyzes the formation of carbamoyl phosphate from the ammonia moiety of glutamine, carbonate, and phosphate donated by ATP, constituting the first step of 2 biosynthetic pathways, one leading to arginine and/or urea and the other to pyrimidine nucleotides. The large subunit (synthetase) binds the substrates ammonia (free or transferred from glutamine from the small subunit), hydrogencarbonate and ATP and carries out an ATP-coupled ligase reaction, activating hydrogencarbonate by forming carboxy phosphate which reacts with ammonia to form carbamoyl phosphate. The sequence is that of Carbamoyl phosphate synthase large chain from Methanosarcina barkeri (strain Fusaro / DSM 804).